A 919-amino-acid chain; its full sequence is Phosphoenolpyruvate carboxylase (919 aa).

Residues His138 and Lys579 contribute to the active site.

This sequence belongs to the PEPCase type 1 family. Mg(2+) is required as a cofactor.

The catalysed reaction is oxaloacetate + phosphate = phosphoenolpyruvate + hydrogencarbonate. Its activity is regulated as follows. Activity not stimulated by acetyl-CoA in the absence of any allosteric inhibitor, while the corresponding protein from E.coli is strongly stimulated. In terms of biological role, forms oxaloacetate, a four-carbon dicarboxylic acid source for the tricarboxylic acid cycle. The polypeptide is Phosphoenolpyruvate carboxylase (ppc) (Corynebacterium glutamicum (strain ATCC 13032 / DSM 20300 / JCM 1318 / BCRC 11384 / CCUG 27702 / LMG 3730 / NBRC 12168 / NCIMB 10025 / NRRL B-2784 / 534)).